The following is a 609-amino-acid chain: MFDAKNFLANVTHQPGVYRMFDEKGQVIYVGKAKDLKKRLSSYFRTNLNSKKTSALVSHIHSIETTITASETEALLLEHNYIKAFQPRYNVLLRDDKSYPYILLTKERHPRITSHRGSKKVQGEYFGPYPHAGAVRETLSLLQKLFPIRQCENSVYNNRSRPCLQYQIGRCSGPCIDGLVSDEEYQQQVDFARLFLQGKDQQVLEHLIKKMEQASMQLNFEQAAYFRDQIQAIRAVIEKQFVSNERLDDMDILAIAYQLGIACVQVLFIRQGKVLGNRSYFPKVPANTDLSELTETFVGQFYLQGHQGRIIPSTIIVDHVLNEKHELEVLLTEQAGRKVNIQDNVKGNKSKFLHLAQMNAQAALVTQLKQANLIQERYQALQELLSLTTIKRMECFDISHTMGEQTIASCVVFDTEGPLKSDYRRFNISGITAGDDYAAMEQALLKRYDRPLENEKIPDIIFIDGGKGQLNRALQVFAQLNVSWDKNKPILIGVAKGVDRKAGLETLIISKQNKEVNLLPDSLALHLIQHIRDESHYHAIGGHRKKRQQAFTQSGLEAIEGVGAKRRQALLKYLGGMQGVKNATLAEISSVPGISAALAERIYETLRSE.

The region spanning 13–91 is the GIY-YIG domain; that stretch reads HQPGVYRMFD…IKAFQPRYNV (79 aa). The UVR domain maps to 201-236; that stretch reads QQVLEHLIKKMEQASMQLNFEQAAYFRDQIQAIRAV.

The protein belongs to the UvrC family. Interacts with UvrB in an incision complex.

The protein localises to the cytoplasm. Its function is as follows. The UvrABC repair system catalyzes the recognition and processing of DNA lesions. UvrC both incises the 5' and 3' sides of the lesion. The N-terminal half is responsible for the 3' incision and the C-terminal half is responsible for the 5' incision. The chain is UvrABC system protein C from Histophilus somni (strain 129Pt) (Haemophilus somnus).